The chain runs to 165 residues: Small ribosomal subunit protein uS5 (165 aa).

The S5 DRBM domain occupies 13 to 76 (LEEKVLVVNR…EAARKNLITI (64 aa)).

This sequence belongs to the universal ribosomal protein uS5 family. In terms of assembly, part of the 30S ribosomal subunit. Contacts proteins S4 and S8.

Its function is as follows. With S4 and S12 plays an important role in translational accuracy. Functionally, located at the back of the 30S subunit body where it stabilizes the conformation of the head with respect to the body. This is Small ribosomal subunit protein uS5 from Chlamydia caviae (strain ATCC VR-813 / DSM 19441 / 03DC25 / GPIC) (Chlamydophila caviae).